The sequence spans 352 residues: MASLRGVSRSARALQPFSAQFAVRRCASTQTGAGAAAATPKSNIPDLAELETRSALDAPIPSEEDKKEFRPWKRAADRKARLPSSRYQYHPPKYNRGPLHPIQSPPSSDPIARDFVPGPFNMPRLKETFRTVMASDLMTLAYIHTPPGTPKKEPTERLRAWEGDSPYFANRARRAPRGAPELPIRERDISFRNIPEIKEITVSTFVPLGLKNPDLLIVARAVLLAMTGTMPEMTRSKNNVVQWQLQANKPAGCKTTIYGNAAWEFMDRLIHLVLPRIKDWKGVPASTGDGSGNVQFGLNPEDVQLFPEVECNYDMYPAKMIPGCHIAIKTTATSDRQAKLLLQSLGVPFYSN.

A disordered region spans residues 28–109 (STQTGAGAAA…HPIQSPPSSD (82 aa)). Positions 63–80 (EEDKKEFRPWKRAADRKA) are enriched in basic and acidic residues.

Belongs to the universal ribosomal protein uL5 family. As to quaternary structure, component of the mitochondrial large ribosomal subunit (mt-LSU). Mature N.crassa 74S mitochondrial ribosomes consist of a small (37S) and a large (54S) subunit. The 37S small subunit contains a 16S ribosomal RNA (16S mt-rRNA) and 32 different proteins. The 54S large subunit contains a 23S rRNA (23S mt-rRNA) and 42 different proteins. Unlike bacterial L5, uL5m does not bind zinc.

The protein resides in the mitochondrion. Functionally, component of the mitochondrial ribosome (mitoribosome), a dedicated translation machinery responsible for the synthesis of mitochondrial genome-encoded proteins, including at least some of the essential transmembrane subunits of the mitochondrial respiratory chain. The mitoribosomes are attached to the mitochondrial inner membrane and translation products are cotranslationally integrated into the membrane. The polypeptide is Large ribosomal subunit protein uL5m (mrpl7) (Neurospora crassa (strain ATCC 24698 / 74-OR23-1A / CBS 708.71 / DSM 1257 / FGSC 987)).